The sequence spans 128 residues: Large ribosomal subunit protein bL21 (128 aa).

Residues Gly104–Glu128 form a disordered region. Residues Glu119–Glu128 show a composition bias toward low complexity.

Belongs to the bacterial ribosomal protein bL21 family. As to quaternary structure, part of the 50S ribosomal subunit. Contacts protein L20.

Functionally, this protein binds to 23S rRNA in the presence of protein L20. The polypeptide is Large ribosomal subunit protein bL21 (Rhodopseudomonas palustris (strain HaA2)).